The chain runs to 508 residues: Lysine--tRNA ligase (508 aa).

Glu-418 and Glu-425 together coordinate Mg(2+).

This sequence belongs to the class-II aminoacyl-tRNA synthetase family. Homodimer. Mg(2+) is required as a cofactor.

The protein localises to the cytoplasm. It carries out the reaction tRNA(Lys) + L-lysine + ATP = L-lysyl-tRNA(Lys) + AMP + diphosphate. The polypeptide is Lysine--tRNA ligase (Burkholderia cenocepacia (strain HI2424)).